A 336-amino-acid chain; its full sequence is Holliday junction branch migration complex subunit RuvB (336 aa).

The segment at M1–Y182 is large ATPase domain (RuvB-L). ATP-binding positions include L21, R22, G63, K66, T67, S68, E129–F131, R172, Y182, and R219. T67 contacts Mg(2+). The small ATPAse domain (RuvB-S) stretch occupies residues S183–G253. The segment at E256–F336 is head domain (RuvB-H). DNA contacts are provided by R310 and R315.

This sequence belongs to the RuvB family. As to quaternary structure, homohexamer. Forms an RuvA(8)-RuvB(12)-Holliday junction (HJ) complex. HJ DNA is sandwiched between 2 RuvA tetramers; dsDNA enters through RuvA and exits via RuvB. An RuvB hexamer assembles on each DNA strand where it exits the tetramer. Each RuvB hexamer is contacted by two RuvA subunits (via domain III) on 2 adjacent RuvB subunits; this complex drives branch migration. In the full resolvosome a probable DNA-RuvA(4)-RuvB(12)-RuvC(2) complex forms which resolves the HJ.

The protein resides in the cytoplasm. It catalyses the reaction ATP + H2O = ADP + phosphate + H(+). In terms of biological role, the RuvA-RuvB-RuvC complex processes Holliday junction (HJ) DNA during genetic recombination and DNA repair, while the RuvA-RuvB complex plays an important role in the rescue of blocked DNA replication forks via replication fork reversal (RFR). RuvA specifically binds to HJ cruciform DNA, conferring on it an open structure. The RuvB hexamer acts as an ATP-dependent pump, pulling dsDNA into and through the RuvAB complex. RuvB forms 2 homohexamers on either side of HJ DNA bound by 1 or 2 RuvA tetramers; 4 subunits per hexamer contact DNA at a time. Coordinated motions by a converter formed by DNA-disengaged RuvB subunits stimulates ATP hydrolysis and nucleotide exchange. Immobilization of the converter enables RuvB to convert the ATP-contained energy into a lever motion, pulling 2 nucleotides of DNA out of the RuvA tetramer per ATP hydrolyzed, thus driving DNA branch migration. The RuvB motors rotate together with the DNA substrate, which together with the progressing nucleotide cycle form the mechanistic basis for DNA recombination by continuous HJ branch migration. Branch migration allows RuvC to scan DNA until it finds its consensus sequence, where it cleaves and resolves cruciform DNA. This Helicobacter pylori (strain J99 / ATCC 700824) (Campylobacter pylori J99) protein is Holliday junction branch migration complex subunit RuvB.